The sequence spans 258 residues: Methionine aminopeptidase (258 aa).

Histidine 84 is a substrate binding site. Residues aspartate 102, aspartate 113, and histidine 176 each coordinate a divalent metal cation. Histidine 183 contributes to the substrate binding site. 2 residues coordinate a divalent metal cation: glutamate 211 and glutamate 242.

The protein belongs to the peptidase M24A family. Methionine aminopeptidase type 1 subfamily. Monomer. Co(2+) serves as cofactor. Zn(2+) is required as a cofactor. It depends on Mn(2+) as a cofactor. Requires Fe(2+) as cofactor.

The catalysed reaction is Release of N-terminal amino acids, preferentially methionine, from peptides and arylamides.. Removes the N-terminal methionine from nascent proteins. The N-terminal methionine is often cleaved when the second residue in the primary sequence is small and uncharged (Met-Ala-, Cys, Gly, Pro, Ser, Thr, or Val). Requires deformylation of the N(alpha)-formylated initiator methionine before it can be hydrolyzed. This is Methionine aminopeptidase from Aquifex aeolicus (strain VF5).